We begin with the raw amino-acid sequence, 752 residues long: Maltodextrin phosphorylase (752 aa).

Lys603 bears the N6-(pyridoxal phosphate)lysine mark.

This sequence belongs to the glycogen phosphorylase family. Pyridoxal 5'-phosphate is required as a cofactor.

It carries out the reaction [(1-&gt;4)-alpha-D-glucosyl](n) + phosphate = [(1-&gt;4)-alpha-D-glucosyl](n-1) + alpha-D-glucose 1-phosphate. Functionally, phosphorylase is an important allosteric enzyme in carbohydrate metabolism. Enzymes from different sources differ in their regulatory mechanisms and in their natural substrates. However, all known phosphorylases share catalytic and structural properties. The sequence is that of Maltodextrin phosphorylase (malP) from Streptococcus pneumoniae serotype 4 (strain ATCC BAA-334 / TIGR4).